Consider the following 380-residue polypeptide: Protein COS12 (380 aa).

At 1–70 (MDGAKFENTV…WKIRGKRHYL (70 aa)) the chain is on the cytoplasmic side. The chain crosses the membrane as a helical span at residues 71-91 (VIVTALMFEVLYFLWTYSYIF). Residues 92–231 (RERTLGKQVS…KLLWAFKEVT (140 aa)) are Extracellular-facing. Residues 232 to 252 (IMNSRFAFFSIAYLNGLLTIP) traverse the membrane as a helical segment. Residues 253–257 (RLRNS) lie on the Cytoplasmic side of the membrane. Residues 258–278 (LHILYVCAVLSSMIIEYLIGI) traverse the membrane as a helical segment. Topologically, residues 279 to 380 (DKFRFKSMNL…KEAQSACNDV (102 aa)) are extracellular.

It belongs to the DUP/COS family.

The protein localises to the membrane. The chain is Protein COS12 (COS12) from Saccharomyces cerevisiae (strain ATCC 204508 / S288c) (Baker's yeast).